The sequence spans 163 residues: MEIERVAELILLKDKNFKEKERLRDLLREYIKTKDEISYLENILEDFENLDVNLKHLKRDADIIKSILPRLSKFTNIPVFMKIVKMLEAVEKIDTEDLESVRWNINKEIEELNDKLKTLENELRVIIINEALSKIGTSNLEEFSKYLENLRYEEKNQKEEAYN.

This is an uncharacterized protein from Methanocaldococcus jannaschii (strain ATCC 43067 / DSM 2661 / JAL-1 / JCM 10045 / NBRC 100440) (Methanococcus jannaschii).